We begin with the raw amino-acid sequence, 237 residues long: Leucyl/phenylalanyl-tRNA--protein transferase (237 aa).

It belongs to the L/F-transferase family.

It is found in the cytoplasm. It catalyses the reaction N-terminal L-lysyl-[protein] + L-leucyl-tRNA(Leu) = N-terminal L-leucyl-L-lysyl-[protein] + tRNA(Leu) + H(+). It carries out the reaction N-terminal L-arginyl-[protein] + L-leucyl-tRNA(Leu) = N-terminal L-leucyl-L-arginyl-[protein] + tRNA(Leu) + H(+). The catalysed reaction is L-phenylalanyl-tRNA(Phe) + an N-terminal L-alpha-aminoacyl-[protein] = an N-terminal L-phenylalanyl-L-alpha-aminoacyl-[protein] + tRNA(Phe). Functions in the N-end rule pathway of protein degradation where it conjugates Leu, Phe and, less efficiently, Met from aminoacyl-tRNAs to the N-termini of proteins containing an N-terminal arginine or lysine. The protein is Leucyl/phenylalanyl-tRNA--protein transferase of Shewanella baltica (strain OS185).